Here is a 319-residue protein sequence, read N- to C-terminus: tRNA (guanine(9)-N(1))-methyltransferase Trmt10A (319 aa).

Disordered stretches follow at residues 16–87 (LSLN…KRQL) and 275–319 (AKIT…SLDS). Polar residues predominate over residues 17 to 33 (SLNNCPGTTPGTPMSKN). The Nuclear localization signal signature appears at 35-42 (LKKQRKLA). 3 stretches are compositionally biased toward basic and acidic residues: residues 40 to 58 (KLAE…EREK), 78 to 87 (SRKELKKRQL), and 276 to 302 (KITD…ESDK). Residues 44–67 (FAELRKLRREREREKKKQKRREAK) adopt a coiled-coil conformation. Residues 83–274 (KKRQLADGGK…ETIPMRKGAK (192 aa)) enclose the SAM-dependent MTase TRM10-type domain.

It belongs to the class IV-like SAM-binding methyltransferase superfamily. TRM10 family.

It localises to the nucleus. The protein localises to the nucleolus. The protein resides in the chromosome. The catalysed reaction is guanosine(9) in tRNA + S-adenosyl-L-methionine = N(1)-methylguanosine(9) in tRNA + S-adenosyl-L-homocysteine + H(+). Functionally, S-adenosyl-L-methionine-dependent guanine N(1)-methyltransferase that catalyzes the formation of N(1)-methylguanine at position 9 (m1G9) in tRNAs. Modulates Mettl3-mediated N6-methyladenosine (m6A) methylation of mRNA 5'-UTRs and 3'-UTRs independent of its methyltransferase activity; influences mRNA stability and protein levels, in particular of Hsp70 chaperone proteins and other stress response proteins. Also regulates stability of transcripts encoding proteins involved in signaling processes and proteins involved in neurogenesis and axon guidance pathways. The protein is tRNA (guanine(9)-N(1))-methyltransferase Trmt10A of Drosophila melanogaster (Fruit fly).